The following is a 501-amino-acid chain: ATP synthase subunit alpha (501 aa).

169–176 serves as a coordination point for ATP; that stretch reads GDRQTGKT.

The protein belongs to the ATPase alpha/beta chains family. As to quaternary structure, F-type ATPases have 2 components, CF(1) - the catalytic core - and CF(0) - the membrane proton channel. CF(1) has five subunits: alpha(3), beta(3), gamma(1), delta(1), epsilon(1). CF(0) has three main subunits: a(1), b(2) and c(9-12). The alpha and beta chains form an alternating ring which encloses part of the gamma chain. CF(1) is attached to CF(0) by a central stalk formed by the gamma and epsilon chains, while a peripheral stalk is formed by the delta and b chains.

It is found in the cell membrane. It catalyses the reaction ATP + H2O + 4 H(+)(in) = ADP + phosphate + 5 H(+)(out). Its function is as follows. Produces ATP from ADP in the presence of a proton gradient across the membrane. The alpha chain is a regulatory subunit. This is ATP synthase subunit alpha from Streptococcus pneumoniae serotype 4 (strain ATCC BAA-334 / TIGR4).